The chain runs to 490 residues: Kinetochore protein Nuf2 homolog (490 aa).

Coiled-coil stretches lie at residues 146–280 (DRKF…KLEA) and 310–407 (DLID…SETI). Disordered regions lie at residues 346–365 (QSETHEQLRIEHTQKSEERQ) and 468–490 (IDAGENTENCDPQPNDSSFSVFK).

The protein belongs to the NUF2 family. In terms of assembly, component of the NDC80 complex, which is composed of at least ndc-80 and him-10. The NDC80 complex interacts with knl-1.

It is found in the nucleus. The protein resides in the chromosome. The protein localises to the centromere. Its subcellular location is the kinetochore. Its function is as follows. Acts as a component of the essential kinetochore-associated NDC80 complex, which is required for chromosome segregation in mitosis and meiosis and spindle checkpoint activity. The ndc-80 complex synergistically enhances the affinity of the ska-1 complex for microtubules and may allow the ndc-80 complex to track depolymerizing microtubules. This is Kinetochore protein Nuf2 homolog (him-10) from Caenorhabditis elegans.